The chain runs to 327 residues: Aldo-keto reductase family 7 member A3 (327 aa).

Phosphoserine is present on Ser2. Positions 13, 18, and 40 each coordinate NADP(+). The active-site Proton donor is the Tyr45. Residue His109 participates in citrate binding. NADP(+)-binding residues include Asn140, Asn194, Leu196, Gly198, Arg204, and Arg218. The citrate site is built by Tyr228 and Arg231. Residues Ser286, Gln290, Gln293, Asn294, and Arg327 each contribute to the NADP(+) site.

The protein belongs to the aldo/keto reductase family. Aldo/keto reductase 2 subfamily. Homodimer. Heterodimer with AKR7A2.

Its subcellular location is the cytoplasm. The catalysed reaction is a primary alcohol + NADP(+) = an aldehyde + NADPH + H(+). It carries out the reaction aflatoxin B1 dialdehyde + NADPH + H(+) = aflatoxin B1 C(6a)-monoaldehyde + NADP(+). The enzyme catalyses aflatoxin B1 dialdehyde + NADPH + H(+) = aflatoxin B1 C(8)-monoaldehyde + NADP(+). It catalyses the reaction aflatoxin B1 C(6a)-monoaldehyde + NADPH + 2 H(+) = aflatoxin B1 triol + NADP(+). With respect to regulation, inhibited by citrate. Functionally, catalyzes the NADPH-dependent reduction of various carbonyl-containing compounds, including aldehydes, ketones, and toxic products from cellular metabolism or environmental exposure. Can reduce the dialdehyde form of aflatoxin B1 (AFB1) into alcohol derivatives, via monoaldehydes intermediates, thus preventing the formation of protein adducts that contribute to AFB1-induced toxicity. The sequence is that of Aldo-keto reductase family 7 member A3 from Rattus norvegicus (Rat).